The sequence spans 445 residues: Tubulin beta-2A chain (445 aa).

The MREI motif signature appears at 1–4 (MREI). Residue Gln-11 coordinates GTP. Ser-40 carries the post-translational modification Phosphoserine. Residue Lys-58 is modified to N6-acetyllysine; alternate. N6-succinyllysine; alternate is present on Lys-58. Lys-58 participates in a covalent cross-link: Glycyl lysine isopeptide (Lys-Gly) (interchain with G-Cter in ubiquitin); alternate. Glu-69, Ser-138, Gly-142, Thr-143, and Gly-144 together coordinate GTP. Glu-69 is a binding site for Mg(2+). Ser-172 carries the phosphoserine; by CDK1 modification. GTP contacts are provided by Asn-204 and Asn-226. Residues Thr-285 and Thr-290 each carry the phosphothreonine modification. Omega-N-methylarginine is present on Arg-318. Lys-324 is covalently cross-linked (Glycyl lysine isopeptide (Lys-Gly) (interchain with G-Cter in ubiquitin)). The disordered stretch occupies residues 422 to 445 (YQQYQDATADEQGEFEEEEGEDEA). The segment covering 429–445 (TADEQGEFEEEEGEDEA) has biased composition (acidic residues). The residue at position 438 (Glu-438) is a 5-glutamyl polyglutamate.

This sequence belongs to the tubulin family. In terms of assembly, interacts with ZNRF1. Part of a complex composed at least of ASH2L, EMSY, HCFC1, HSPA8, CCAR2, MATR3, MKI67, RBBP5, TUBB2A, WDR5 and ZNF335; this complex may have a histone H3-specific methyltransferase activity. Dimer of alpha and beta chains. A typical microtubule is a hollow water-filled tube with an outer diameter of 25 nm and an inner diameter of 15 nM. Alpha-beta heterodimers associate head-to-tail to form protofilaments running lengthwise along the microtubule wall with the beta-tubulin subunit facing the microtubule plus end conferring a structural polarity. Microtubules usually have 13 protofilaments but different protofilament numbers can be found in some organisms and specialized cells. Mg(2+) is required as a cofactor. Post-translationally, some glutamate residues at the C-terminus are polyglutamylated, resulting in polyglutamate chains on the gamma-carboxyl group. Polyglutamylation plays a key role in microtubule severing by spastin (SPAST). SPAST preferentially recognizes and acts on microtubules decorated with short polyglutamate tails: severing activity by SPAST increases as the number of glutamates per tubulin rises from one to eight, but decreases beyond this glutamylation threshold. Glutamylation is also involved in cilia motility. Some glutamate residues at the C-terminus are monoglycylated but not polyglycylated due to the absence of functional TTLL10 in human. Monoglycylation is mainly limited to tubulin incorporated into cilia and flagella axonemes, which is required for their stability and maintenance. Flagella glycylation controls sperm motility. Both polyglutamylation and monoglycylation can coexist on the same protein on adjacent residues, and lowering glycylation levels increases polyglutamylation, and reciprocally. In terms of processing, phosphorylated on Ser-172 by CDK1 during the cell cycle, from metaphase to telophase, but not in interphase. This phosphorylation inhibits tubulin incorporation into microtubules. High expression in brain, where it represents 30% of all beta-tubulins.

Its subcellular location is the cytoplasm. It localises to the cytoskeleton. Tubulin is the major constituent of microtubules, a cylinder consisting of laterally associated linear protofilaments composed of alpha- and beta-tubulin heterodimers. Microtubules grow by the addition of GTP-tubulin dimers to the microtubule end, where a stabilizing cap forms. Below the cap, tubulin dimers are in GDP-bound state, owing to GTPase activity of alpha-tubulin. This Homo sapiens (Human) protein is Tubulin beta-2A chain (TUBB2A).